Here is a 564-residue protein sequence, read N- to C-terminus: Threonine--tRNA ligase (564 aa).

Residues Asp-167–Pro-464 form a catalytic region. Zn(2+)-binding residues include Cys-260, His-311, and His-441.

It belongs to the class-II aminoacyl-tRNA synthetase family. As to quaternary structure, homodimer. Zn(2+) is required as a cofactor.

It localises to the cytoplasm. It carries out the reaction tRNA(Thr) + L-threonine + ATP = L-threonyl-tRNA(Thr) + AMP + diphosphate + H(+). Catalyzes the attachment of threonine to tRNA(Thr) in a two-step reaction: L-threonine is first activated by ATP to form Thr-AMP and then transferred to the acceptor end of tRNA(Thr). Also edits incorrectly charged L-seryl-tRNA(Thr). This is Threonine--tRNA ligase from Mycoplasma genitalium (strain ATCC 33530 / DSM 19775 / NCTC 10195 / G37) (Mycoplasmoides genitalium).